Reading from the N-terminus, the 194-residue chain is dCTP deaminase (194 aa).

DCTP is bound by residues 110 to 115 (RSSLAR), Asp128, 136 to 138 (VLE), Tyr171, Lys178, and Gln182. Glu138 functions as the Proton donor/acceptor in the catalytic mechanism. The disordered stretch occupies residues 174–194 (RKSSKYKDQQEAVASRISQDK).

The protein belongs to the dCTP deaminase family. Homotrimer.

It catalyses the reaction dCTP + H2O + H(+) = dUTP + NH4(+). Its pathway is pyrimidine metabolism; dUMP biosynthesis; dUMP from dCTP (dUTP route): step 1/2. Its function is as follows. Catalyzes the deamination of dCTP to dUTP. This Shewanella frigidimarina (strain NCIMB 400) protein is dCTP deaminase.